A 351-amino-acid chain; its full sequence is Photosystem II D2 protein (351 aa).

A helical transmembrane segment spans residues 39–59 (TAYLAVGGWMTGTTFVTSWYT). Histidine 116 provides a ligand contact to chlorophyll a. Residues 123–139 (GFCLRQFEIARLVGIRP) form a helical membrane-spanning segment. Pheophytin a contacts are provided by glutamine 128 and asparagine 141. A helical membrane pass occupies residues 151–164 (VFVSVFLLYPLGQA). Histidine 196 is a chlorophyll a binding site. Residues 206–226 (GALLCAIHGATVENTLFEDGD) traverse the membrane as a helical segment. Positions 213 and 260 each coordinate a plastoquinone. Histidine 213 is a binding site for Fe cation. Residue histidine 267 coordinates Fe cation. A helical transmembrane segment spans residues 277-293 (GLWTSAIGIVGLALNLR).

It belongs to the reaction center PufL/M/PsbA/D family. PSII is composed of 1 copy each of membrane proteins PsbA, PsbB, PsbC, PsbD, PsbE, PsbF, PsbH, PsbI, PsbJ, PsbK, PsbL, PsbM, PsbT, PsbX, PsbY, PsbZ, Psb30/Ycf12, at least 3 peripheral proteins of the oxygen-evolving complex and a large number of cofactors. It forms dimeric complexes. The D1/D2 heterodimer binds P680, chlorophylls that are the primary electron donor of PSII, and subsequent electron acceptors. It shares a non-heme iron and each subunit binds pheophytin, quinone, additional chlorophylls, carotenoids and lipids. There is also a Cl(-1) ion associated with D1 and D2, which is required for oxygen evolution. The PSII complex binds additional chlorophylls, carotenoids and specific lipids. is required as a cofactor.

The protein localises to the plastid. It localises to the chloroplast thylakoid membrane. The enzyme catalyses 2 a plastoquinone + 4 hnu + 2 H2O = 2 a plastoquinol + O2. Photosystem II (PSII) is a light-driven water:plastoquinone oxidoreductase that uses light energy to abstract electrons from H(2)O, generating O(2) and a proton gradient subsequently used for ATP formation. It consists of a core antenna complex that captures photons, and an electron transfer chain that converts photonic excitation into a charge separation. The D1/D2 (PsbA/PsbD) reaction center heterodimer binds P680, the primary electron donor of PSII as well as several subsequent electron acceptors. D2 is needed for assembly of a stable PSII complex. The protein is Photosystem II D2 protein of Phaeodactylum tricornutum (strain CCAP 1055/1).